Reading from the N-terminus, the 627-residue chain is DNA mismatch repair protein MutL (627 aa).

A disordered region spans residues 376–404; the sequence is APASTNEVREGSAARAGNYQPPEPPSREA.

Belongs to the DNA mismatch repair MutL/HexB family.

This protein is involved in the repair of mismatches in DNA. It is required for dam-dependent methyl-directed DNA mismatch repair. May act as a 'molecular matchmaker', a protein that promotes the formation of a stable complex between two or more DNA-binding proteins in an ATP-dependent manner without itself being part of a final effector complex. In Aeromonas salmonicida (strain A449), this protein is DNA mismatch repair protein MutL.